The following is a 472-amino-acid chain: UDP-glycosyltransferase 100 (472 aa).

His-15 functions as the Proton acceptor in the catalytic mechanism. His-15 serves as a coordination point for an anthocyanidin. Asp-117 serves as the catalytic Charge relay. 7 residues coordinate UDP-alpha-D-glucose: Ala-344, Gln-346, His-361, Trp-364, Asn-365, Ser-366, and Glu-369. Gly-384 contacts an anthocyanidin. The UDP-alpha-D-glucose site is built by Glu-385 and Gln-386.

This sequence belongs to the UDP-glycosyltransferase family.

It catalyses the reaction (20S)-protopanaxadiol + UDP-alpha-D-glucose = (20S)-ginsenoside C-K + UDP + H(+). It carries out the reaction (20S)-protopanaxatriol + UDP-alpha-D-glucose = (20S)-ginsenoside Rh1 + UDP + H(+). The catalysed reaction is (20S)-ginsenoside F1 + UDP-alpha-D-glucose = (20S)-ginsenoside Rg1 + UDP + H(+). It participates in secondary metabolite biosynthesis; terpenoid biosynthesis. Functionally, component of the dammarane-type triterpene saponins (e.g. PPT-type ginsenosides or panaxosides) biosynthetic pathway. Glycosyltransferase that catalyzes the biosynthesis of ginsenoside Rh1 from protopanaxatriol (PPT) and the conversion of ginsenoside F1 to ginsenoside Rg1. In Panax ginseng (Korean ginseng), this protein is UDP-glycosyltransferase 100.